A 348-amino-acid chain; its full sequence is NADH-ubiquinone oxidoreductase chain 2 (348 aa).

11 consecutive transmembrane segments (helical) span residues 3–23 (PVVL…TFIG), 25–45 (HWLL…PLMI), 67–87 (SALL…WSLL), 95–115 (ATLV…HFWL), 118–138 (VLQG…KLAP), 149–171 (LNSN…GGLN), 178–198 (ILAY…HYSP), 203–223 (LNLA…KLFN), 240–260 (LSII…LSGF), 274–294 (DLAI…FFYL), and 324–344 (LILM…PTIF).

Belongs to the complex I subunit 2 family.

It localises to the mitochondrion inner membrane. It carries out the reaction a ubiquinone + NADH + 5 H(+)(in) = a ubiquinol + NAD(+) + 4 H(+)(out). Functionally, core subunit of the mitochondrial membrane respiratory chain NADH dehydrogenase (Complex I) that is believed to belong to the minimal assembly required for catalysis. Complex I functions in the transfer of electrons from NADH to the respiratory chain. The immediate electron acceptor for the enzyme is believed to be ubiquinone. This is NADH-ubiquinone oxidoreductase chain 2 (MT-ND2) from Squalus acanthias (Spiny dogfish).